A 278-amino-acid chain; its full sequence is Ribonuclease HII (278 aa).

One can recognise an RNase H type-2 domain in the interval tryptophan 71 to proline 259. A divalent metal cation is bound by residues aspartate 77, glutamate 78, and aspartate 168.

The protein belongs to the RNase HII family. The cofactor is Mn(2+). Mg(2+) is required as a cofactor.

It is found in the cytoplasm. The catalysed reaction is Endonucleolytic cleavage to 5'-phosphomonoester.. Endonuclease that specifically degrades the RNA of RNA-DNA hybrids. The polypeptide is Ribonuclease HII (Rhodopseudomonas palustris (strain BisA53)).